The primary structure comprises 591 residues: Protein CBFA2T3 (591 aa).

Positions 1–105 (MPGGTPRLEG…SSSASLSTHQ (105 aa)) are disordered. The mediates localization to the nucleus stretch occupies residues 1-381 (MPGGTPRLEG…ADREELNHWI (381 aa)). Residues 41 to 52 (STPPNMPPPPPA) are compositionally biased toward pro residues. Positions 55–105 (QGATRHPSFTPSTMMNGSSHSPTAINGAPSTPNGFSNGPATSSSASLSTHQ) are enriched in polar residues. In terms of domain architecture, TAFH spans 112–207 (ARQLSKLKRF…SPAQYLAQHE (96 aa)). Disordered regions lie at residues 226 to 291 (LEVS…PPQH) and 386 to 420 (DAEDMKKGSPPSARPHNSSSSSEAPQLDVHRDFAP). The segment covering 230-256 (ESGKRRTPDRTKENGLDRDPLHPEHLS) has biased composition (basic and acidic residues). A compositionally biased stretch (polar residues) spans 263–274 (SPAQRYSPSNGL). The span at 279 to 290 (NGLPHPPGPPPQ) shows a compositional bias: pro residues. The span at 394-410 (SPPSARPHNSSSSSEAP) shows a compositional bias: low complexity. Residues 433–488 (RKAEEAVNEVKRQAMSELQKAVSDAERKAHELITTERAKMERALAEAKRQASEDAL) adopt a coiled-coil conformation. Zn(2+) contacts are provided by C501, C504, C512, C515, C521, C525, H533, and C537. An MYND-type zinc finger spans residues 501–537 (CWNCGRKASETCSGCNTARYCGSFCQHKDWEKHHHVC). The disordered stretch occupies residues 548 to 591 (SVPTAVGQPEAVPPMASSPSDAGSAGASRAGTPGTPAPLESASR). Residues 560-585 (PPMASSPSDAGSAGASRAGTPGTPAP) are compositionally biased toward low complexity.

The protein belongs to the CBFA2T family.

The protein localises to the nucleus. Its subcellular location is the nucleolus. It localises to the nucleoplasm. The protein resides in the golgi apparatus. Functionally, functions as a transcriptional repressor. Regulates the proliferation and the differentiation of erythroid progenitors. Plays a role in granulocyte differentiation. May also function as an A-kinase-anchoring protein. The polypeptide is Protein CBFA2T3 (CBFA2T3) (Gallus gallus (Chicken)).